The following is a 503-amino-acid chain: ATP synthase subunit alpha (503 aa).

170 to 177 lines the ATP pocket; it reads GDRKTGKT.

The protein belongs to the ATPase alpha/beta chains family. In terms of assembly, F-type ATPases have 2 components, CF(1) - the catalytic core - and CF(0) - the membrane proton channel. CF(1) has five subunits: alpha(3), beta(3), gamma(1), delta(1), epsilon(1). CF(0) has four main subunits: a, b, b' and c.

It is found in the cellular thylakoid membrane. The enzyme catalyses ATP + H2O + 4 H(+)(in) = ADP + phosphate + 5 H(+)(out). Its function is as follows. Produces ATP from ADP in the presence of a proton gradient across the membrane. The alpha chain is a regulatory subunit. The polypeptide is ATP synthase subunit alpha (Rippkaea orientalis (strain PCC 8801 / RF-1) (Cyanothece sp. (strain PCC 8801))).